We begin with the raw amino-acid sequence, 214 residues long: Large ribosomal subunit protein uL2my, C-terminal part (214 aa).

The N-terminal 30 residues, 1–30, are a transit peptide targeting the mitochondrion; sequence MSGLVALCRARASASSSLFNSVIRPAFRNF. Positions 157–214 are disordered; it reads VAMNPCDHPHGGGEGKSKSSGSRGRTSVSPWGKPCKGGYKSASVKKKKKRLAEAAAKM. Residues 163 to 173 are compositionally biased toward basic and acidic residues; it reads DHPHGGGEGKS. Residues 174–185 show a composition bias toward low complexity; that stretch reads KSSGSRGRTSVS.

It belongs to the universal ribosomal protein uL2 family. As to quaternary structure, component of the mitochondrial ribosome large subunit.

The protein localises to the mitochondrion. In Arabidopsis thaliana (Mouse-ear cress), this protein is Large ribosomal subunit protein uL2my, C-terminal part.